We begin with the raw amino-acid sequence, 309 residues long: Probable manganese-dependent inorganic pyrophosphatase (309 aa).

Histidine 9, aspartate 13, aspartate 15, aspartate 75, histidine 97, and aspartate 149 together coordinate Mn(2+).

Belongs to the PPase class C family. Requires Mn(2+) as cofactor.

It localises to the cytoplasm. It carries out the reaction diphosphate + H2O = 2 phosphate + H(+). The protein is Probable manganese-dependent inorganic pyrophosphatase of Staphylococcus saprophyticus subsp. saprophyticus (strain ATCC 15305 / DSM 20229 / NCIMB 8711 / NCTC 7292 / S-41).